The sequence spans 391 residues: Na(+)/H(+) antiporter NhaA (391 aa).

Transmembrane regions (helical) follow at residues 14-34 (AGGILLVIAAAIAMTIANSPL), 47-67 (FGMSVSHWINDGLMAVFFLLI), 87-107 (IFPAIAAVGGMLAPALIYVAF), 117-137 (GWAIPAATDIAFALGIMALLG), 146-166 (VFLLALAIIDDLGVVVIIALF), 171-191 (LSTMALLVGFAMTGVLFMLNA), 205-225 (AILWFAVLKSGVHATLAGVVI), 252-272 (VAFGILPLFAFANAGISLEGV), 280-300 (MLPLGIALGLLVGKPLGIFTF), 318-338 (FIHIFAVSVLCGIGFTMSIFI), and 356-376 (LGILMGSTTAAIIGYVLLHFS).

The protein belongs to the NhaA Na(+)/H(+) (TC 2.A.33) antiporter family.

Its subcellular location is the cell inner membrane. It carries out the reaction Na(+)(in) + 2 H(+)(out) = Na(+)(out) + 2 H(+)(in). In terms of biological role, na(+)/H(+) antiporter that extrudes sodium in exchange for external protons. In Vibrio campbellii (strain ATCC BAA-1116), this protein is Na(+)/H(+) antiporter NhaA.